A 468-amino-acid chain; its full sequence is Arginine biosynthesis bifunctional protein ArgJ, mitochondrial (468 aa).

A mitochondrion-targeting transit peptide spans 1–23 (MVGFSRCALSQLRQPKAQLVRSF). Positions 198, 227, 238, 324, 463, and 468 each coordinate substrate. The Nucleophile role is filled by Thr-238.

Belongs to the ArgJ family. Heterodimer of an alpha and a beta chain. The alpha and beta chains are autoproteolytically processed from a single precursor protein within the mitochondrion.

Its subcellular location is the mitochondrion matrix. It catalyses the reaction N(2)-acetyl-L-ornithine + L-glutamate = N-acetyl-L-glutamate + L-ornithine. It carries out the reaction L-glutamate + acetyl-CoA = N-acetyl-L-glutamate + CoA + H(+). It participates in amino-acid biosynthesis; L-arginine biosynthesis; L-ornithine and N-acetyl-L-glutamate from L-glutamate and N(2)-acetyl-L-ornithine (cyclic): step 1/1. Its pathway is amino-acid biosynthesis; L-arginine biosynthesis; N(2)-acetyl-L-ornithine from L-glutamate: step 1/4. In terms of biological role, catalyzes two activities which are involved in the cyclic version of arginine biosynthesis: the synthesis of acetylglutamate from glutamate and acetyl-CoA, and of ornithine by transacetylation between acetylornithine and glutamate. The chain is Arginine biosynthesis bifunctional protein ArgJ, mitochondrial from Podospora anserina (strain S / ATCC MYA-4624 / DSM 980 / FGSC 10383) (Pleurage anserina).